Here is a 216-residue protein sequence, read N- to C-terminus: GTP cyclohydrolase 1 (216 aa).

3 residues coordinate Zn(2+): cysteine 108, histidine 111, and cysteine 179.

This sequence belongs to the GTP cyclohydrolase I family. As to quaternary structure, toroid-shaped homodecamer, composed of two pentamers of five dimers.

The enzyme catalyses GTP + H2O = 7,8-dihydroneopterin 3'-triphosphate + formate + H(+). Its pathway is cofactor biosynthesis; 7,8-dihydroneopterin triphosphate biosynthesis; 7,8-dihydroneopterin triphosphate from GTP: step 1/1. In Shewanella sp. (strain ANA-3), this protein is GTP cyclohydrolase 1.